The primary structure comprises 633 residues: Heterogeneous nuclear ribonucleoprotein R (633 aa).

The segment at 1 to 24 (MANQVNGNAVQLKEEEEPMDTSSV) is disordered. An N-acetylalanine modification is found at A2. Residues K13 and K171 each participate in a glycyl lysine isopeptide (Lys-Gly) (interchain with G-Cter in SUMO2) cross-link. RRM domains lie at 165–244 (TEVF…ISVA), 246–328 (NRLF…WADP), and 341–411 (KVLF…LAKP). A Glycyl lysine isopeptide (Lys-Gly) (interchain with G-Cter in SUMO2) cross-link involves residue K359. K366 is subject to N6-acetyllysine. Positions 412–418 (PDKKRKE) match the Nuclear localization signal motif. The disordered stretch occupies residues 412–456 (PDKKRKERQAARQASRSTAYEDYYYHPPPRMPPPIRGRGRGGGRG). Residues 437–446 (HPPPRMPPPI) are compositionally biased toward pro residues. The segment at 447 to 567 (RGRGRGGGRG…SRGSRGNRGG (121 aa)) is RNA-binding RGG-box. The 1; approximate repeat unit spans residues 462–471 (PDYYGYEDYY). Residues 462 to 497 (PDYYGYEDYYDDYYGYDYHDYRGGYEDPYYGYDDGY) are 3 X 11 AA approximate repeats of D-D-Y-Y-G-Y-D-Y-H-D-Y. Repeat unit 2 spans residues 472-482 (DDYYGYDYHDY). The stretch at 488 to 497 (DPYYGYDDGY) is one 3; approximate repeat. The segment covering 501 to 510 (GRGGGRGGRG) has biased composition (gly residues). The disordered stretch occupies residues 501–633 (GRGGGRGGRG…YQDTYGQQWK (133 aa)). The span at 511–524 (APPPPRGRGAPPPR) shows a compositional bias: pro residues. The span at 525-541 (GRAGYSQRGAPLGPPRG) shows a compositional bias: low complexity. Over residues 558–570 (SRGSRGNRGGNVG) the composition is skewed to gly residues. A compositionally biased stretch (polar residues) spans 588-604 (TNNQQNWGSQPIAQQPL). Over residues 605-621 (QQGGDYSGNYGYNNDNQ) the composition is skewed to low complexity. A compositionally biased stretch (polar residues) spans 622–633 (EFYQDTYGQQWK).

In terms of assembly, identified in the spliceosome C complex. Identified in a IGF2BP1-dependent mRNP granule complex containing untranslated mRNAs. Interacts with GTPBP1.

It localises to the nucleus. It is found in the microsome. The protein resides in the nucleoplasm. The protein localises to the cytoplasm. In terms of biological role, component of ribonucleosomes, which are complexes of at least 20 other different heterogeneous nuclear ribonucleoproteins (hnRNP). hnRNP play an important role in processing of precursor mRNA in the nucleus. This is Heterogeneous nuclear ribonucleoprotein R (HNRNPR) from Homo sapiens (Human).